The following is a 224-amino-acid chain: Flagellar L-ring protein (224 aa).

Positions 1–15 (MARYLLLASTLLLAA) are cleaved as a signal peptide. A lipid anchor (N-palmitoyl cysteine) is attached at Cys-16. Cys-16 carries S-diacylglycerol cysteine lipidation.

This sequence belongs to the FlgH family. In terms of assembly, the basal body constitutes a major portion of the flagellar organelle and consists of four rings (L,P,S, and M) mounted on a central rod.

It is found in the cell outer membrane. The protein localises to the bacterial flagellum basal body. In terms of biological role, assembles around the rod to form the L-ring and probably protects the motor/basal body from shearing forces during rotation. This Shewanella sp. (strain ANA-3) protein is Flagellar L-ring protein.